The sequence spans 73 residues: DNA gyrase inhibitor YacG (73 aa).

Residues Cys-14, Cys-17, Cys-30, and Cys-34 each coordinate Zn(2+). Residues 54 to 73 (AEQADDTAGPGAAEDDTDSH) are disordered.

Belongs to the DNA gyrase inhibitor YacG family. In terms of assembly, interacts with GyrB. It depends on Zn(2+) as a cofactor.

Its function is as follows. Inhibits all the catalytic activities of DNA gyrase by preventing its interaction with DNA. Acts by binding directly to the C-terminal domain of GyrB, which probably disrupts DNA binding by the gyrase. The sequence is that of DNA gyrase inhibitor YacG from Hyphomonas neptunium (strain ATCC 15444).